The primary structure comprises 123 residues: MLKKVILAAFILVGSTLGAFSFSSDASAKHVNGNITWYNGVGKKGSSGKKLGHWDCATKIGFDVPRNGTKIRAYAKAKPKKVITVYKNDVGRMPNAVLDVSPKAFKALGYPLSKGKVAGHYSY.

This is an uncharacterized protein from Bacillus subtilis (strain 168).